A 297-amino-acid polypeptide reads, in one-letter code: Transcription factor bHLH129 (297 aa).

Residues 1 to 145 (MYPPNSSKST…SSSHQEHNSL (145 aa)) form a disordered region. At serine 35 the chain carries Phosphoserine. A compositionally biased stretch (low complexity) spans 68–82 (SSIGFDSNASSSSSL). The span at 111 to 121 (PNGGYGGGGEQ) shows a compositional bias: gly residues. Serine 138 is modified (phosphoserine). The region spanning 239 to 289 (FATHPRSIAERERRTRISGKLKKLQELVPNMDKQTSYADMLDLAVEHIKGL) is the bHLH domain.

As to quaternary structure, homodimer.

It is found in the nucleus. This is Transcription factor bHLH129 (BHLH129) from Arabidopsis thaliana (Mouse-ear cress).